A 191-amino-acid polypeptide reads, in one-letter code: Ribosomal RNA small subunit methyltransferase G (191 aa).

S-adenosyl-L-methionine contacts are provided by residues G62, F67, 111 to 112, and R124; that span reads IE.

It belongs to the methyltransferase superfamily. RNA methyltransferase RsmG family.

The protein resides in the cytoplasm. The catalysed reaction is guanosine(527) in 16S rRNA + S-adenosyl-L-methionine = N(7)-methylguanosine(527) in 16S rRNA + S-adenosyl-L-homocysteine. In terms of biological role, specifically methylates the N7 position of guanine in position 527 of 16S rRNA. This is Ribosomal RNA small subunit methyltransferase G from Rickettsia typhi (strain ATCC VR-144 / Wilmington).